Reading from the N-terminus, the 647-residue chain is DNA mismatch repair protein MutL (647 aa).

The protein belongs to the DNA mismatch repair MutL/HexB family.

In terms of biological role, this protein is involved in the repair of mismatches in DNA. It is required for dam-dependent methyl-directed DNA mismatch repair. May act as a 'molecular matchmaker', a protein that promotes the formation of a stable complex between two or more DNA-binding proteins in an ATP-dependent manner without itself being part of a final effector complex. In Bacillus thuringiensis (strain Al Hakam), this protein is DNA mismatch repair protein MutL.